A 444-amino-acid chain; its full sequence is Zinc finger protein ZIC 1 (444 aa).

The C2H2-type 1 zinc-finger motif lies at 222–257 (LICKWIEPEQLANPKKSCNKTFSTMHELVTHVTVEH). Residues 271–293 (EECPREGKPFKAKYKLVNHIRVH) form a C2H2-type 2; degenerate zinc finger. C2H2-type zinc fingers lie at residues 299–323 (FPCP…KRTH), 329–353 (FKCE…MHVH), and 359–381 (YLCK…MKVH). The interval 372–432 (SSLRKHMKVH…SSAGHHTASH (61 aa)) is disordered. Residues 383 to 432 (SSSQGSQPSPAASSGYESSTPPTIVSPSTENQTASSLSPSSSAGHHTASH) are compositionally biased toward low complexity.

The protein belongs to the GLI C2H2-type zinc-finger protein family.

The protein localises to the nucleus. Its subcellular location is the cytoplasm. Acts as a transcriptional activator. Involved in neurogenesis. Plays important roles in the early stage of organogenesis of the CNS, as well as during dorsal spinal cord development and maturation of the cerebellum. Binds to the minimal GLI-consensus sequence 5'-TGGGTGGTC-3'. In Gallus gallus (Chicken), this protein is Zinc finger protein ZIC 1 (ZIC1).